The chain runs to 90 residues: Probable Fe(2+)-trafficking protein (90 aa).

Belongs to the Fe(2+)-trafficking protein family.

Could be a mediator in iron transactions between iron acquisition and iron-requiring processes, such as synthesis and/or repair of Fe-S clusters in biosynthetic enzymes. The chain is Probable Fe(2+)-trafficking protein from Aeromonas salmonicida (strain A449).